The sequence spans 422 residues: MATALQKPGMVPPPPGEESQTVILPPGWHSYLSPQGRRYYVNTTTNETTWERPSSSPGISASPGPHRSSLPTTVNGYHASGTPAHPPETAHMSLRKSTGDSQNLGSSSPGRKQSKENTITINCVTFPHPDTMPEQQLLKPTEWSYCDYFWADKKDPQGNGTVAGFELLLQKQLKGKQMQKEMSEFIRERIKIEEEYAKNLAKLSQNSLAAQEEGSLGEAWAQVKKSLADEAEVHLKFSAKLHSEVEKPLMNFRENFKKDMKKCDHHIADLRKQLGESRYASVEKARKALTERQKDLEMKTQQLEIKLSNKTEEDIKKARRKSTQAGDDLMRCVDLYNQAQSKWFEEMVTTTLELERLEVERVEMIRQHLCQYTQLRHETDMFNQSTVEPVDQLLRKVDPAKDRELWVREHKTGNIRPVDMEI.

Residues 1 to 117 (MATALQKPGM…SPGRKQSKEN (117 aa)) form a disordered region. Residues 22-55 (VILPPGWHSYLSPQGRRYYVNTTTNETTWERPSS) form the WW domain. Residues 41–52 (VNTTTNETTWER) show a composition bias toward polar residues. A compositionally biased stretch (low complexity) spans 53-65 (PSSSPGISASPGP). Phosphoserine is present on residues serine 62 and serine 108. Residues 95–117 (RKSTGDSQNLGSSSPGRKQSKEN) are compositionally biased toward polar residues. Residues 141 to 402 (TEWSYCDYFW…LLRKVDPAKD (262 aa)) form the F-BAR domain. A coiled-coil region spans residues 254–329 (ENFKKDMKKC…RKSTQAGDDL (76 aa)).

The protein resides in the cytoplasm. Functionally, may play a role in promoting maturation and morphological differentiation of cerebellar neurons. The sequence is that of Growth arrest-specific protein 7 (Gas7) from Rattus norvegicus (Rat).